The primary structure comprises 297 residues: Phenylalanine-4-hydroxylase (297 aa).

Fe cation-binding residues include histidine 138, histidine 143, and glutamate 184.

This sequence belongs to the biopterin-dependent aromatic amino acid hydroxylase family. Monomer. The cofactor is Fe(2+).

It carries out the reaction (6R)-L-erythro-5,6,7,8-tetrahydrobiopterin + L-phenylalanine + O2 = (4aS,6R)-4a-hydroxy-L-erythro-5,6,7,8-tetrahydrobiopterin + L-tyrosine. Its pathway is amino-acid degradation; L-phenylalanine degradation; acetoacetate and fumarate from L-phenylalanine: step 1/6. The sequence is that of Phenylalanine-4-hydroxylase (phhA) from Chromobacterium violaceum (strain ATCC 12472 / DSM 30191 / JCM 1249 / CCUG 213 / NBRC 12614 / NCIMB 9131 / NCTC 9757 / MK).